Reading from the N-terminus, the 232-residue chain is Enolase-phosphatase E1 (232 aa).

It belongs to the HAD-like hydrolase superfamily. MasA/MtnC family. Monomer. Mg(2+) is required as a cofactor.

It carries out the reaction 5-methylsulfanyl-2,3-dioxopentyl phosphate + H2O = 1,2-dihydroxy-5-(methylsulfanyl)pent-1-en-3-one + phosphate. The protein operates within amino-acid biosynthesis; L-methionine biosynthesis via salvage pathway; L-methionine from S-methyl-5-thio-alpha-D-ribose 1-phosphate: step 3/6. It functions in the pathway amino-acid biosynthesis; L-methionine biosynthesis via salvage pathway; L-methionine from S-methyl-5-thio-alpha-D-ribose 1-phosphate: step 4/6. Its function is as follows. Bifunctional enzyme that catalyzes the enolization of 2,3-diketo-5-methylthiopentyl-1-phosphate (DK-MTP-1-P) into the intermediate 2-hydroxy-3-keto-5-methylthiopentenyl-1-phosphate (HK-MTPenyl-1-P), which is then dephosphorylated to form the acireductone 1,2-dihydroxy-3-keto-5-methylthiopentene (DHK-MTPene). In Xylella fastidiosa (strain 9a5c), this protein is Enolase-phosphatase E1.